A 204-amino-acid chain; its full sequence is Urease accessory protein UreG (204 aa).

11 to 18 lines the GTP pocket; the sequence is GPVGAGKT.

It belongs to the SIMIBI class G3E GTPase family. UreG subfamily. Homodimer. UreD, UreF and UreG form a complex that acts as a GTP-hydrolysis-dependent molecular chaperone, activating the urease apoprotein by helping to assemble the nickel containing metallocenter of UreC. The UreE protein probably delivers the nickel.

The protein resides in the cytoplasm. Facilitates the functional incorporation of the urease nickel metallocenter. This process requires GTP hydrolysis, probably effectuated by UreG. The chain is Urease accessory protein UreG from Staphylococcus epidermidis (strain ATCC 12228 / FDA PCI 1200).